Reading from the N-terminus, the 380-residue chain is Tubulin-like protein CetZ (380 aa).

Residues 10 to 14, 103 to 105, glutamate 136, asparagine 163, and asparagine 181 contribute to the GTP site; these read QCGTK and GTG. Residues 359-380 are disordered; it reads PSLEATGSDDPEGFAEYREVSR.

The protein belongs to the CetZ family.

Its subcellular location is the cytoplasm. Its function is as follows. Involved in cell shape control. The protein is Tubulin-like protein CetZ of Thermococcus kodakarensis (strain ATCC BAA-918 / JCM 12380 / KOD1) (Pyrococcus kodakaraensis (strain KOD1)).